A 1240-amino-acid chain; its full sequence is DNA-directed RNA polymerase subunit beta (1240 aa).

This sequence belongs to the RNA polymerase beta chain family. The RNAP catalytic core consists of 2 alpha, 1 beta, 1 beta' and 1 omega subunit. When a sigma factor is associated with the core the holoenzyme is formed, which can initiate transcription.

It carries out the reaction RNA(n) + a ribonucleoside 5'-triphosphate = RNA(n+1) + diphosphate. Functionally, DNA-dependent RNA polymerase catalyzes the transcription of DNA into RNA using the four ribonucleoside triphosphates as substrates. This is DNA-directed RNA polymerase subunit beta from Phytoplasma australiense.